A 482-amino-acid polypeptide reads, in one-letter code: BTB/POZ domain-containing protein 6-B (482 aa).

The 71-residue stretch at 80 to 150 folds into the BTB domain; sequence ADVHFVVGPP…MYSDEIELEA (71 aa).

Interacts with cul3. Interacts (via BTB domain) with zbtb16/plzf. In embryos, expressed in the cranial ganglia.

The protein localises to the cytoplasm. Its subcellular location is the nucleus. Functionally, adapter protein for the cul3 E3 ubiquitin-protein ligase complex. Promotes the export of zbtb16/plzf from the nucleus to the cytoplasm and targets zbtb16/plzf for ubiquitination and degradation. Up-regulates neurog1 expression and antagonizes zbtb16/plzf, to promote neurogenesis. The sequence is that of BTB/POZ domain-containing protein 6-B (btbd6b) from Danio rerio (Zebrafish).